We begin with the raw amino-acid sequence, 508 residues long: Enhancer of mRNA-decapping protein 3 (508 aa).

The Sm domain occupies 1 to 68 (MAADWLGSIV…ITELKILEIP (68 aa)). Residues 1-79 (MAADWLGSIV…PGGNQHFGDV (79 aa)) are required for P-body targeting and interaction with DCP1A. The interval 95–192 (ISQNGTGKLV…QMKNKDDECF (98 aa)) is disordered. Phosphoserine is present on residues S131, S138, S140, and S161. A required for interaction with DDX6 region spans residues 191–296 (CFGDDIEEIP…HKKLLSVAEK (106 aa)). Residues 192 to 228 (FGDDIEEIPDTDFDFEGNLALFDKAAVFEEIGTYERR) enclose the DFDF domain. A YjeF N-terminal domain is found at 283 to 487 (SYEQHKKLLS…DIGIPQQVFQ (205 aa)).

The protein belongs to the EDC3 family. In terms of assembly, homodimer (via YjeF N-terminal domain). Forms a complex with DCP1A, DCP2, DDX6 and EDC4/HEDLS, within this complex directly interacts with DCP1A and DDX6. Interacts with ZFP36.

The protein resides in the cytoplasm. It is found in the P-body. Its function is as follows. Binds single-stranded RNA. Involved in the process of mRNA degradation and in the positive regulation of mRNA decapping. The sequence is that of Enhancer of mRNA-decapping protein 3 (EDC3) from Macaca fascicularis (Crab-eating macaque).